Consider the following 178-residue polypeptide: Oligoribonuclease (178 aa).

Residues 7–168 (LIWIDLEMTG…DDIRESIAEL (162 aa)) enclose the Exonuclease domain. Residue Y128 is part of the active site.

It belongs to the oligoribonuclease family.

It is found in the cytoplasm. 3'-to-5' exoribonuclease specific for small oligoribonucleotides. The protein is Oligoribonuclease of Pseudomonas syringae pv. tomato (strain ATCC BAA-871 / DC3000).